A 165-amino-acid polypeptide reads, in one-letter code: Large ribosomal subunit protein uL10 (165 aa).

This sequence belongs to the universal ribosomal protein uL10 family. In terms of assembly, part of the ribosomal stalk of the 50S ribosomal subunit. The N-terminus interacts with L11 and the large rRNA to form the base of the stalk. The C-terminus forms an elongated spine to which L12 dimers bind in a sequential fashion forming a multimeric L10(L12)X complex.

In terms of biological role, forms part of the ribosomal stalk, playing a central role in the interaction of the ribosome with GTP-bound translation factors. The chain is Large ribosomal subunit protein uL10 from Burkholderia mallei (strain NCTC 10229).